A 366-amino-acid polypeptide reads, in one-letter code: tRNA/tmRNA (uracil-C(5))-methyltransferase (366 aa).

Residues Gln-190, Tyr-218, Asn-223, Glu-239, and Asp-299 each contribute to the S-adenosyl-L-methionine site. Residue Cys-324 is the Nucleophile of the active site. Glu-358 functions as the Proton acceptor in the catalytic mechanism.

The protein belongs to the class I-like SAM-binding methyltransferase superfamily. RNA M5U methyltransferase family. TrmA subfamily.

It carries out the reaction uridine(54) in tRNA + S-adenosyl-L-methionine = 5-methyluridine(54) in tRNA + S-adenosyl-L-homocysteine + H(+). The catalysed reaction is uridine(341) in tmRNA + S-adenosyl-L-methionine = 5-methyluridine(341) in tmRNA + S-adenosyl-L-homocysteine + H(+). In terms of biological role, dual-specificity methyltransferase that catalyzes the formation of 5-methyluridine at position 54 (m5U54) in all tRNAs, and that of position 341 (m5U341) in tmRNA (transfer-mRNA). This chain is tRNA/tmRNA (uracil-C(5))-methyltransferase, found in Salmonella paratyphi A (strain ATCC 9150 / SARB42).